The primary structure comprises 279 residues: Oxygen-dependent coproporphyrinogen-III oxidase (279 aa).

Ser-102 is a binding site for substrate. Residues His-106 and His-116 each coordinate a divalent metal cation. Residue His-116 is the Proton donor of the active site. 118 to 120 (NTR) is a substrate binding site. The a divalent metal cation site is built by His-149 and His-179. Residues 244-279 (YVEFNLLYDRGTKFGLMTDGNVEAILMSLPPEVKFN) form an important for dimerization region.

It belongs to the aerobic coproporphyrinogen-III oxidase family. Homodimer. A divalent metal cation serves as cofactor.

The protein resides in the cytoplasm. The enzyme catalyses coproporphyrinogen III + O2 + 2 H(+) = protoporphyrinogen IX + 2 CO2 + 2 H2O. It functions in the pathway porphyrin-containing compound metabolism; protoporphyrin-IX biosynthesis; protoporphyrinogen-IX from coproporphyrinogen-III (O2 route): step 1/1. Involved in the heme biosynthesis. Catalyzes the aerobic oxidative decarboxylation of propionate groups of rings A and B of coproporphyrinogen-III to yield the vinyl groups in protoporphyrinogen-IX. The protein is Oxygen-dependent coproporphyrinogen-III oxidase of Rickettsia felis (strain ATCC VR-1525 / URRWXCal2) (Rickettsia azadi).